We begin with the raw amino-acid sequence, 195 residues long: uncharacterized protein (195 aa).

Positions 24 to 141 constitute an HD domain; sequence NTDENLKLIF…VFLADKISWD (118 aa).

This is an uncharacterized protein from Lactococcus lactis subsp. cremoris (Streptococcus cremoris).